A 383-amino-acid chain; its full sequence is Transcription factor Sox-17-alpha (383 aa).

2 disordered regions span residues 1–20 (MSSPDGGYASDDQNQGKCSV) and 37–58 (NSLGEGKLKSDAGSANSRGKAE). The segment at residues 61 to 129 (IRRPMNAFMV…QHMQDHPNYK (69 aa)) is a DNA-binding region (HMG box). Residues 267–382 (GSPVQGMMGC…TAVYYCNYPS (116 aa)) enclose the Sox C-terminal domain. Residues 331 to 339 (TEFEQYLSY) carry the 9aaTAD motif. Residues 332-337 (EFEQYL) are required for transcriptional activity and interaction with ctnnb1.

In terms of assembly, interacts (via C-terminus) with ctnnb1/beta-catenin (via Armadillo repeats); this interaction is required for inhibition of wnt-signaling. As to expression, expressed throughout the deep and superficial endoderm during gastrulation. During neural and early tail bud stages, expression declines significantly in the anterior endoderm, except in the endoderm behind the cement gland. Strong expression persists in the endoderm posterior to the liver diverticulum until late tail bud stage. By late tailbud, expression is undetectable in most of the endoderm but is maintained in the presumptive gall bladder region and the extreme posterior region. In addition, expressed in endothelial cells in the head and along the flank of the embryo.

The protein localises to the nucleus. Its function is as follows. Transcription activator. Binds to the DNA sequence 5'-AACAAT-3'. All of the sox17 proteins are required for embryonic endoderm development and gastrulation movements, and show some redundancy in function. In addition, the sox17 proteins have distinct but overlapping roles in later gut development. Acts downstream of vegt-signaling in endoderm differentiation to induce a range of endodermal genes both directly (including endodermin and dhh/chh) and indirectly. Also represses wnt-responsive genes to inhibit wnt/beta-catenin signaling. This Xenopus tropicalis (Western clawed frog) protein is Transcription factor Sox-17-alpha (sox17a).